A 525-amino-acid polypeptide reads, in one-letter code: Keratin, type II cytoskeletal 4 (525 aa).

The interval 1–145 is head; the sequence is MIARQSSVRG…DPEIQKIRTA (145 aa). The residue at position 13 (arginine 13) is an Omega-N-methylarginine. The interval 146–181 is coil 1A; the sequence is EREQIKTLNNKFASFIDKVRFLEQQNKVLETKWNLL. An IF rod domain is found at 146–459; sequence EREQIKTLNN…KLLEGEECRM (314 aa). The tract at residues 182–200 is linker 1; the sequence is QQQTTTTSPKSLDPFFETY. The tract at residues 201-292 is coil 1B; it reads INALRKNLDT…VLYEAELAQM (92 aa). Positions 293-316 are linker 12; that stretch reads QTHVSDTSVVLSMDNNRNLDLDGI. The coil 2 stretch occupies residues 317-455; sequence IAEVRAQYED…ATYRKLLEGE (139 aa). Residues 456 to 524 form a tail region; it reads ECRMSGECKS…SSATITKRSP (69 aa).

This sequence belongs to the intermediate filament family. Heterotetramer of two type I and two type II keratins. Keratin-4 is generally associated with keratin-13. In terms of tissue distribution, expressed in the dorsal and ventral epithelium of the tongue. Highest expression levels are detected in the suprabasal layer with low levels detected in the basal cell layer. Within the suprabasal layer expression is highest in the spinous cells, decreases in the granular cells and is not detected in the stratum corneum.

This chain is Keratin, type II cytoskeletal 4 (Krt4), found in Mus musculus (Mouse).